The primary structure comprises 270 residues: Putative phosphoenolpyruvate synthase regulatory protein (270 aa).

151 to 158 (GVSRCGKT) contributes to the ADP binding site.

The protein belongs to the pyruvate, phosphate/water dikinase regulatory protein family. PSRP subfamily.

It carries out the reaction [pyruvate, water dikinase] + ADP = [pyruvate, water dikinase]-phosphate + AMP + H(+). The catalysed reaction is [pyruvate, water dikinase]-phosphate + phosphate + H(+) = [pyruvate, water dikinase] + diphosphate. Functionally, bifunctional serine/threonine kinase and phosphorylase involved in the regulation of the phosphoenolpyruvate synthase (PEPS) by catalyzing its phosphorylation/dephosphorylation. The chain is Putative phosphoenolpyruvate synthase regulatory protein from Methylobacillus flagellatus (strain ATCC 51484 / DSM 6875 / VKM B-1610 / KT).